Reading from the N-terminus, the 260-residue chain is Mantle protein (260 aa).

The first 16 residues, 1-16 (MLAVLLFAALVATAYS), serve as a signal peptide directing secretion.

Prismatic layer of shell (at protein level). Expressed primarily in the mantle with highest level in the mantle edge and lower level in the mantle pallium.

Its subcellular location is the secreted. In Pinctada maxima (Silver-lipped pearl oyster), this protein is Mantle protein.